Consider the following 880-residue polypeptide: DNA-directed RNA polymerase subunit Rpo1N (880 aa).

Residues Cys58, Cys61, Cys68, and His71 each contribute to the Zn(2+) site. Residues Lys88 and 92–95 (EFLK) each bind dsDNA. Zn(2+) contacts are provided by Cys98 and Cys101. Lys138 serves as a coordination point for dsDNA. The Zn(2+) site is built by Cys146 and Cys149. Residues Lys303, 305 to 310 (KEGRFR), Arg323, and Gln422 contribute to the dsDNA site. Asp456, Asp458, and Asp460 together coordinate Mg(2+). Positions 573, 575, 580, and 582 each coordinate Zn(2+). DsDNA contacts are provided by residues 812–822 (RTSQSGYMQRR) and Gln815.

It belongs to the RNA polymerase beta' chain family. As to quaternary structure, part of the 13-subunit RNA polymerase complex. Rpo1N and Rpo5 form a cleft which docks Rpo13. Interacts with Rpo8 on the periphery of the clamp head. Mg(2+) is required as a cofactor. Requires Zn(2+) as cofactor.

It localises to the cytoplasm. The enzyme catalyses RNA(n) + a ribonucleoside 5'-triphosphate = RNA(n+1) + diphosphate. DNA-dependent RNA polymerase (RNAP) catalyzes the transcription of DNA into RNA using the four ribonucleoside triphosphates as substrates. Forms the clamp head domain. The sequence is that of DNA-directed RNA polymerase subunit Rpo1N from Saccharolobus shibatae (strain ATCC 51178 / DSM 5389 / JCM 8931 / NBRC 15437 / B12) (Sulfolobus shibatae).